The chain runs to 283 residues: Tropomyosin (283 aa).

A coiled-coil region spans residues 1 to 283 (MDAIKKKMQA…LDSAFVELIL (283 aa)).

The protein belongs to the tropomyosin family. In terms of assembly, homodimer.

In terms of biological role, tropomyosin, in association with the troponin complex, plays a central role in the calcium dependent regulation of muscle contraction. The protein is Tropomyosin of Locusta migratoria (Migratory locust).